Here is a 153-residue protein sequence, read N- to C-terminus: UPF0756 membrane protein LCABL_15860 (153 aa).

The next 4 membrane-spanning stretches (helical) occupy residues 4–24 (WLFL…SLII), 52–72 (WGVT…EIGF), 85–105 (WIAI…VGLL), and 115–135 (LVFG…GPVI).

This sequence belongs to the UPF0756 family.

Its subcellular location is the cell membrane. The sequence is that of UPF0756 membrane protein LCABL_15860 from Lacticaseibacillus casei (strain BL23) (Lactobacillus casei).